We begin with the raw amino-acid sequence, 142 residues long: Nucleoside diphosphate kinase (142 aa).

ATP is bound by residues Lys11, Phe59, Arg87, Thr93, Arg104, and Asn114. Catalysis depends on His117, which acts as the Pros-phosphohistidine intermediate.

It belongs to the NDK family. As to quaternary structure, homotetramer. Mg(2+) is required as a cofactor.

The protein resides in the cytoplasm. The enzyme catalyses a 2'-deoxyribonucleoside 5'-diphosphate + ATP = a 2'-deoxyribonucleoside 5'-triphosphate + ADP. The catalysed reaction is a ribonucleoside 5'-diphosphate + ATP = a ribonucleoside 5'-triphosphate + ADP. Functionally, major role in the synthesis of nucleoside triphosphates other than ATP. The ATP gamma phosphate is transferred to the NDP beta phosphate via a ping-pong mechanism, using a phosphorylated active-site intermediate. This chain is Nucleoside diphosphate kinase, found in Dechloromonas aromatica (strain RCB).